The sequence spans 493 residues: Trigger factor (493 aa).

One can recognise a PPIase FKBP-type domain in the interval 162–243 (GDFVSLDLSA…VRGVKEKELP (82 aa)). A disordered region spans residues 432-493 (ELALPARPAP…AAVDSGDRDI (62 aa)). Positions 449–470 (HAGHDHEGHDHADHAGHDHAGD) are enriched in basic and acidic residues. Positions 474 to 485 (AEPAEAPAATAA) are enriched in low complexity.

It belongs to the FKBP-type PPIase family. Tig subfamily.

It is found in the cytoplasm. The enzyme catalyses [protein]-peptidylproline (omega=180) = [protein]-peptidylproline (omega=0). Its function is as follows. Involved in protein export. Acts as a chaperone by maintaining the newly synthesized protein in an open conformation. Functions as a peptidyl-prolyl cis-trans isomerase. The polypeptide is Trigger factor (Frankia alni (strain DSM 45986 / CECT 9034 / ACN14a)).